The following is a 208-amino-acid chain: Uracil phosphoribosyltransferase (208 aa).

5-phospho-alpha-D-ribose 1-diphosphate contacts are provided by residues Arg78, Arg103, and 130-138 (DPMLATGGS). Uracil-binding positions include Ile193 and 198–200 (GDA). Asp199 is a 5-phospho-alpha-D-ribose 1-diphosphate binding site.

The protein belongs to the UPRTase family. Requires Mg(2+) as cofactor.

The enzyme catalyses UMP + diphosphate = 5-phospho-alpha-D-ribose 1-diphosphate + uracil. Its pathway is pyrimidine metabolism; UMP biosynthesis via salvage pathway; UMP from uracil: step 1/1. With respect to regulation, allosterically activated by GTP. Catalyzes the conversion of uracil and 5-phospho-alpha-D-ribose 1-diphosphate (PRPP) to UMP and diphosphate. This chain is Uracil phosphoribosyltransferase, found in Tolumonas auensis (strain DSM 9187 / NBRC 110442 / TA 4).